Here is a 661-residue protein sequence, read N- to C-terminus: Glycogen debranching enzyme (661 aa).

Aspartate 338 functions as the Nucleophile in the catalytic mechanism. The active-site Proton donor is glutamate 373. Positions 460 to 481 (NQLNGEGNRDGSDRNFSNNHGV) are disordered.

Belongs to the glycosyl hydrolase 13 family.

The enzyme catalyses Hydrolysis of (1-&gt;6)-alpha-D-glucosidic linkages to branches with degrees of polymerization of three or four glucose residues in limit dextrin.. It participates in glycan degradation; glycogen degradation. Functionally, removes maltotriose and maltotetraose chains that are attached by 1,6-alpha-linkage to the limit dextrin main chain, generating a debranched limit dextrin. The protein is Glycogen debranching enzyme of Serratia proteamaculans (strain 568).